The following is a 468-amino-acid chain: Tyramine receptor tyra-2 (468 aa).

The Extracellular segment spans residues Met-1 to Ser-23. Residues Ala-24–Leu-43 form a helical membrane-spanning segment. Over Tyr-44–Asn-54 the chain is Cytoplasmic. A helical transmembrane segment spans residues Leu-55–Val-77. Residues Tyr-78–Cys-91 lie on the Extracellular side of the membrane. An intrachain disulfide couples Cys-91 to Cys-177. Residues Glu-92–Leu-114 form a helical membrane-spanning segment. Residues Asp-115–Thr-134 lie on the Cytoplasmic side of the membrane. Residues Ala-135–Trp-157 traverse the membrane as a helical segment. Over Lys-158–Thr-186 the chain is Extracellular. Asn-171 carries an N-linked (GlcNAc...) asparagine glycan. The chain crosses the membrane as a helical span at residues Val-187–Tyr-209. Residues Gln-210–Lys-387 are Cytoplasmic-facing. Residues Asp-252 to Thr-306 form a disordered region. 2 stretches are compositionally biased toward acidic residues: residues Ala-255–Glu-265 and Ile-281–Ser-292. The helical transmembrane segment at Val-388 to Val-410 threads the bilayer. Over Gln-411–Met-424 the chain is Extracellular. The chain crosses the membrane as a helical span at residues Phe-425–Phe-444. Residues Asn-445–Val-468 lie on the Cytoplasmic side of the membrane.

It belongs to the G-protein coupled receptor 1 family. As to expression, expressed in the pharyngeal neurons, MCL/R and NSML/R and the AS group of amphidial sensory neurons, ASEL/R, AGSL/R, ASHL/R and ASIL/R.

The protein localises to the cell membrane. G-protein coupled receptor for tyramine, a known neurotransmitter and neuromodulator and direct precursor of octopamine. Expression in amphidial sensory neurons suggests a role in chemosensation. This is Tyramine receptor tyra-2 (tyra-2) from Caenorhabditis elegans.